The primary structure comprises 417 residues: MLSRIATSSLGLSRSATGVIATQSRQISFDLSETQKEIQDAALKFSKDVLVPNAAKFDESGEFPWEIVRQAHSLGLMNPQIPEKYGGPGMTTLETALIVEALSYGCTGIQLGIMGPSLAIAPVYISGNEEQKKKYLGALAAEPIIASYCVTEPGAGSDVNGVKTKCEKKGDEYIINGSKAWITGGGHAKWFFVLARSDPNPKTPAGKAFTAFIVDGDTPGITRGKKEKNMGQRCSDTRVITFEDVRVPAENVLGAPGAGFKVAMEAFDMTRPGVAAGALGLSWRCLDESAKYALERKAFGTVIANHQAVQFMLADMAVNLELARLITYKSANDVDNKVRSSYNASIAKCFAADTANQAATNAVQIFGGNGFNSEYPVEKLMRDAKIYQIYEGTSQIQRIVISRMLLGHFAQNGTSRI.

The N-terminal 15 residues, 1-15, are a transit peptide targeting the mitochondrion; it reads MLSRIATSSLGLSRS. Residues 148 to 157 and 181 to 183 each bind FAD; these read YCVTEPGAGS and WIT. Residue serine 157 coordinates substrate. 268–271 provides a ligand contact to substrate; sequence DMTR. Residues 306-307 and 364-368 each bind FAD; these read HQ and QIFGG. The active-site Proton acceptor is glutamate 391. Glycine 392 provides a ligand contact to substrate. Position 393-395 (393-395) interacts with FAD; sequence TSQ.

Belongs to the acyl-CoA dehydrogenase family. As to quaternary structure, homotetramer. FAD serves as cofactor. Expressed in the epidermis and intestine.

It localises to the mitochondrion matrix. The catalysed reaction is a medium-chain 2,3-saturated fatty acyl-CoA + oxidized [electron-transfer flavoprotein] + H(+) = a medium-chain (2E)-enoyl-CoA + reduced [electron-transfer flavoprotein]. Its pathway is lipid metabolism; mitochondrial fatty acid beta-oxidation. Its function is as follows. This enzyme is specific for acyl chain lengths of 4 to 16. The sequence is that of Probable medium-chain specific acyl-CoA dehydrogenase 10, mitochondrial (acdh-10) from Caenorhabditis elegans.